The following is a 426-amino-acid chain: Bile acid CoA-transferase BaiF (426 aa).

Aspartate 168 acts as the Nucleophile in catalysis.

The protein belongs to the CoA-transferase III family.

The catalysed reaction is lithocholoyl-CoA + cholate = choloyl-CoA + lithocholate. The enzyme catalyses deoxycholoyl-CoA + cholate = choloyl-CoA + deoxycholate. It carries out the reaction allodeoxycholoyl-CoA + cholate = allodeoxycholate + choloyl-CoA. It catalyses the reaction allocholate + deoxycholoyl-CoA = allocholoyl-CoA + deoxycholate. The catalysed reaction is allocholate + lithocholoyl-CoA = allocholoyl-CoA + lithocholate. The enzyme catalyses allocholate + allodeoxycholoyl-CoA = allocholoyl-CoA + allodeoxycholate. It carries out the reaction lithocholoyl-CoA + chenodeoxycholate = chenodeoxycholoyl-CoA + lithocholate. It catalyses the reaction ursodeoxycholate + deoxycholoyl-CoA = ursodeoxycholoyl-CoA + deoxycholate. The catalysed reaction is ursodeoxycholate + lithocholoyl-CoA = ursodeoxycholoyl-CoA + lithocholate. The enzyme catalyses allodeoxycholoyl-CoA + ursodeoxycholate = ursodeoxycholoyl-CoA + allodeoxycholate. It carries out the reaction beta-muricholate + lithocholoyl-CoA = beta-muricholoyl-CoA + lithocholate. It catalyses the reaction beta-muricholate + deoxycholoyl-CoA = beta-muricholoyl-CoA + deoxycholate. The catalysed reaction is beta-muricholate + allodeoxycholoyl-CoA = beta-muricholoyl-CoA + allodeoxycholate. The enzyme catalyses choloyl-CoA + H2O = cholate + CoA + H(+). It carries out the reaction chenodeoxycholoyl-CoA + H2O = chenodeoxycholate + CoA + H(+). It functions in the pathway lipid metabolism; bile acid biosynthesis. Functions in the bile acid 7alpha-dehydroxylation pathway, which forms secondary bile acids via the 7alpha-dehydroxylation of primary bile acids, and is carried out by intestinal anaerobic bacteria. Acts as a bile acid CoA transferase with broad bile acid substrate specificity. Catalyzes the transfer of the CoA moiety of secondary bile acid-CoA compounds to primary bile acids. Can use lithocholoyl-CoA, deoxycholoyl-CoA and allodeoxycholoyl-CoA as bile acid CoA donors and cholate, allocholate, chenodeoxycholate, ursodeoxycholate, and beta-muricholate as bile acid CoA acceptors. Also displays CoA hydrolase activity, being able to catalyze the hydrolysis of choloyl-CoA, 3-dehydrocholoyl-CoA, and chenodeoxycholoyl-CoA, releasing CoA and the corresponding free bile acid. However, this latter activity may not represent the actual activity of this enzyme, since using a transferase rather than hydrolase, the bacteria conserve the thioester bond energy, saving ATP molecules. Shows no hydrolytic activity with acetyl-CoA, isovaleryl-CoA, palmitoyl-CoA, or phenylacetyl-CoA as substrates. The polypeptide is Bile acid CoA-transferase BaiF (Clostridium scindens (strain JCM 10418 / VPI 12708)).